The chain runs to 252 residues: MADWNPSLYLQYGAERTRPAAELLARIALDDVSDLLDLGCGPGNSTALLLKRWPLARITGVDNSPAMLEQARVAVPECRFIEADVRQFKPEHAVDLIYANASLQWVPDHYALLPHLISLLKLNGVLAVQMPDNVDEPSHVLMREVAYEQGYPNRAREPLPGIHAYYDILTETGCDVDIWRTTYYHKMSSHQAIIDWVSATGLRPWMQELSEHEQLKFLERYHELLVQQYPIQENGQILLAFPRLFFVARREP.

Belongs to the methyltransferase superfamily. Tam family.

The protein localises to the cytoplasm. It carries out the reaction trans-aconitate + S-adenosyl-L-methionine = (E)-3-(methoxycarbonyl)pent-2-enedioate + S-adenosyl-L-homocysteine. Its function is as follows. Catalyzes the S-adenosylmethionine monomethyl esterification of trans-aconitate. The polypeptide is Trans-aconitate 2-methyltransferase (Enterobacter sp. (strain 638)).